The following is a 342-amino-acid chain: UDP-glucuronic acid decarboxylase 3 (342 aa).

The segment covering 1–11 has biased composition (polar residues); the sequence is MAATSEKQNTT. Residues 1–22 form a disordered region; sequence MAATSEKQNTTKPPPSPSPLRN. Position 61–86 (61–86) interacts with NAD(+); it reads DNYFTGSKENLKKWIGHPRFELIRHD. Arg170 lines the substrate pocket. Tyr173 (proton acceptor) is an active-site residue. 173 to 177 contributes to the NAD(+) binding site; it reads YDEGK. Asn202 provides a ligand contact to substrate. Position 214 (Arg214) interacts with NAD(+). Substrate-binding positions include 215 to 219, 232 to 239, and 299 to 303; these read VVSNF, QKPGTQTR, and DPRQR.

This sequence belongs to the NAD(P)-dependent epimerase/dehydratase family. UDP-glucuronic acid decarboxylase subfamily. NAD(+) serves as cofactor. Ubiquitous.

The protein resides in the cytoplasm. The enzyme catalyses UDP-alpha-D-glucuronate + H(+) = UDP-alpha-D-xylose + CO2. It functions in the pathway nucleotide-sugar biosynthesis; UDP-alpha-D-xylose biosynthesis; UDP-alpha-D-xylose from UDP-alpha-D-glucuronate: step 1/1. Functionally, catalyzes the NAD-dependent decarboxylation of UDP-glucuronic acid to UDP-xylose. Necessary for the biosynthesis of the core tetrasaccharide in glycosaminoglycan biosynthesis. The chain is UDP-glucuronic acid decarboxylase 3 (UXS3) from Arabidopsis thaliana (Mouse-ear cress).